The sequence spans 283 residues: Elongation factor Ts (283 aa).

The involved in Mg(2+) ion dislocation from EF-Tu stretch occupies residues 79 to 82; the sequence is TDFV.

It belongs to the EF-Ts family.

It is found in the cytoplasm. Associates with the EF-Tu.GDP complex and induces the exchange of GDP to GTP. It remains bound to the aminoacyl-tRNA.EF-Tu.GTP complex up to the GTP hydrolysis stage on the ribosome. This chain is Elongation factor Ts, found in Shewanella amazonensis (strain ATCC BAA-1098 / SB2B).